A 417-amino-acid chain; its full sequence is Ribulose bisphosphate carboxylase large chain (417 aa).

Substrate-binding residues include Asn-103 and Thr-153. Lys-155 serves as the catalytic Proton acceptor. Lys-157 provides a ligand contact to substrate. Residues Lys-181, Asp-183, and Glu-184 each coordinate Mg(2+). Lys-181 bears the N6-carboxylysine mark. The active-site Proton acceptor is His-274. Substrate-binding residues include Arg-275, His-307, and Ser-359.

Belongs to the RuBisCO large chain family. Type I subfamily. Heterohexadecamer of 8 large chains and 8 small chains. The cofactor is Mg(2+).

The protein resides in the plastid. It is found in the chloroplast. It carries out the reaction 2 (2R)-3-phosphoglycerate + 2 H(+) = D-ribulose 1,5-bisphosphate + CO2 + H2O. It catalyses the reaction D-ribulose 1,5-bisphosphate + O2 = 2-phosphoglycolate + (2R)-3-phosphoglycerate + 2 H(+). In terms of biological role, ruBisCO catalyzes two reactions: the carboxylation of D-ribulose 1,5-bisphosphate, the primary event in carbon dioxide fixation, as well as the oxidative fragmentation of the pentose substrate in the photorespiration process. Both reactions occur simultaneously and in competition at the same active site. The polypeptide is Ribulose bisphosphate carboxylase large chain (Acrostichum aureum (Golden leather fern)).